A 165-amino-acid polypeptide reads, in one-letter code: MLNQLESLTERVGGSNKLVDRWLHVRKQLLVAYYNLVGIKPGKESYMRLNEKALDNFCQSLVDYLSDGHFNIYERIIREMEGTNPYLAATKLYPQLEANTQQIMDYYDSTLENAIDQDNYLEFQQALSDLGEALEGRFTLEDKLIALALDNNLKASNEDNVARPA.

The protein belongs to the Rsd/AlgQ family. Interacts with RpoD.

The protein resides in the cytoplasm. Functionally, binds RpoD and negatively regulates RpoD-mediated transcription activation by preventing the interaction between the primary sigma factor RpoD with the catalytic core of the RNA polymerase and with promoter DNA. May be involved in replacement of the RNA polymerase sigma subunit from RpoD to RpoS during the transition from exponential growth to the stationary phase. This is Regulator of sigma D from Enterobacter sp. (strain 638).